The following is a 418-amino-acid chain: Histidine--tRNA ligase (418 aa).

It belongs to the class-II aminoacyl-tRNA synthetase family.

The protein localises to the cytoplasm. It catalyses the reaction tRNA(His) + L-histidine + ATP = L-histidyl-tRNA(His) + AMP + diphosphate + H(+). The chain is Histidine--tRNA ligase from Methanococcus vannielii (strain ATCC 35089 / DSM 1224 / JCM 13029 / OCM 148 / SB).